A 259-amino-acid polypeptide reads, in one-letter code: uncharacterized protein (259 aa).

This is an uncharacterized protein from Aquifex aeolicus (strain VF5).